Reading from the N-terminus, the 444-residue chain is Dihydroorotate dehydrogenase (quinone), mitochondrial (444 aa).

Residues 34–56 (GGASRYIIGTASVLVGAMAGFYI) traverse the membrane as a helical segment. FMN contacts are provided by residues 124–128 (AGLDK) and Thr148. Lys128 serves as a coordination point for substrate. Residue 173 to 177 (NRYGF) coordinates substrate. Positions 220 and 250 each coordinate FMN. 250–255 (NVSSPN) contacts substrate. The active-site Nucleophile is the Ser253. FMN is bound by residues Lys301 and Ser329. 330-331 (NT) is a substrate binding site. FMN-binding positions include Gly355, Gly385, and 406-407 (YT).

Belongs to the dihydroorotate dehydrogenase family. Type 2 subfamily. FMN serves as cofactor.

Its subcellular location is the mitochondrion inner membrane. The catalysed reaction is (S)-dihydroorotate + a quinone = orotate + a quinol. Its pathway is pyrimidine metabolism; UMP biosynthesis via de novo pathway; orotate from (S)-dihydroorotate (quinone route): step 1/1. Catalyzes the conversion of dihydroorotate to orotate with quinone as electron acceptor. The protein is Dihydroorotate dehydrogenase (quinone), mitochondrial (URA9) of Eremothecium gossypii (strain ATCC 10895 / CBS 109.51 / FGSC 9923 / NRRL Y-1056) (Yeast).